We begin with the raw amino-acid sequence, 828 residues long: Glycerol-3-phosphate acyltransferase (828 aa).

The HXXXXD motif signature appears at 309 to 314 (CHRSHI).

It belongs to the GPAT/DAPAT family.

The protein localises to the cell inner membrane. It catalyses the reaction sn-glycerol 3-phosphate + an acyl-CoA = a 1-acyl-sn-glycero-3-phosphate + CoA. It participates in phospholipid metabolism; CDP-diacylglycerol biosynthesis; CDP-diacylglycerol from sn-glycerol 3-phosphate: step 1/3. The chain is Glycerol-3-phosphate acyltransferase from Pseudomonas putida (strain W619).